A 606-amino-acid polypeptide reads, in one-letter code: Calmegin (606 aa).

An N-terminal signal peptide occupies residues 1 to 19 (MRFQGFWLCLGLLFISVNA). Residues 20–466 (EFMDDSVEME…QLMSATEQRP (447 aa)) are Lumenal-facing. Lysine 124 carries the post-translational modification N6-acetyllysine. A disulfide bridge connects residues cysteine 147 and cysteine 181. A disordered region spans residues 255-308 (PPINPPKEIEDPTDEKPDDWDERAKIPDASAVKPEDWDESEPPQIVDSSAVKPD). Repeat copies occupy residues 263–276 (IEDP…DWDE), 280–293 (IPDA…DWDE), 299–312 (IVDS…GWLD), 318–331 (IPDP…DWNE), 335–348 (GEWE…PACR), 352–365 (GEWS…PKYK), 366–379 (GIWR…PNYQ), and 380–393 (GIWS…PDYF). Acidic residues predominate over residues 265–275 (DPTDEKPDDWD). The tract at residues 313–346 (NEPEFIPDPNAEKPFDWNEDMDGEWEAPHISNPA) is interaction with PPIB. Cysteine 347 and cysteine 351 are oxidised to a cystine. The chain crosses the membrane as a helical span at residues 467-487 (WLWFIYLLTAALPIALIGSFC). The Cytoplasmic portion of the chain corresponds to 488–606 (WPRKVKKKYE…SVRKRRVRKE (119 aa)). Residues 518 to 544 (EVKEEKAALEKPVDLEEEKKQSDGEIV) are compositionally biased toward basic and acidic residues. The interval 518 to 606 (EVKEEKAALE…SVRKRRVRKE (89 aa)) is disordered. Over residues 545–567 (EKEEEGEPEEKSEEEIEIIEGQE) the composition is skewed to acidic residues. Phosphoserine is present on residues serine 556, serine 572, serine 575, serine 577, serine 587, serine 590, and serine 597. Over residues 568–579 (EGNKSNKSGSED) the composition is skewed to basic and acidic residues. Positions 597–606 (SVRKRRVRKE) are enriched in basic residues.

The protein belongs to the calreticulin family. In terms of assembly, interacts with PPIB and PDILT. Interacts with ADAM2.

The protein localises to the endoplasmic reticulum membrane. Functions during spermatogenesis as a chaperone for a range of client proteins that are important for sperm adhesion onto the egg zona pellucida and for subsequent penetration of the zona pellucida. Required for normal sperm migration from the uterus into the oviduct. Required for normal male fertility. Binds calcium ions. The sequence is that of Calmegin (CLGN) from Bos taurus (Bovine).